Reading from the N-terminus, the 393-residue chain is Acetylornithine aminotransferase (393 aa).

Residues 100–101 (GT) and phenylalanine 132 each bind pyridoxal 5'-phosphate. Arginine 135 contacts N(2)-acetyl-L-ornithine. A pyridoxal 5'-phosphate-binding site is contributed by 217-220 (DEIQ). The residue at position 246 (lysine 246) is an N6-(pyridoxal phosphate)lysine. Serine 275 is a N(2)-acetyl-L-ornithine binding site. Threonine 276 contacts pyridoxal 5'-phosphate.

It belongs to the class-III pyridoxal-phosphate-dependent aminotransferase family. ArgD subfamily. Homodimer. Requires pyridoxal 5'-phosphate as cofactor.

It localises to the cytoplasm. It catalyses the reaction N(2)-acetyl-L-ornithine + 2-oxoglutarate = N-acetyl-L-glutamate 5-semialdehyde + L-glutamate. Its pathway is amino-acid biosynthesis; L-arginine biosynthesis; N(2)-acetyl-L-ornithine from L-glutamate: step 4/4. In Campylobacter jejuni subsp. jejuni serotype O:2 (strain ATCC 700819 / NCTC 11168), this protein is Acetylornithine aminotransferase.